Here is a 554-residue protein sequence, read N- to C-terminus: Cytochrome P450 monooxygenase himC (554 aa).

Residues 52 to 72 (YSVASVAIAGFTALVVSVALY) traverse the membrane as a helical segment. Residues N110, N328, N414, and N425 are each glycosylated (N-linked (GlcNAc...) asparagine). C501 lines the heme pocket.

The protein belongs to the cytochrome P450 family. Heme is required as a cofactor.

The protein resides in the membrane. Its pathway is secondary metabolite biosynthesis. Its function is as follows. Cytochrome P450 monooxygenase; part of the him gene cluster that mediates the biosynthesis of himeic acid A, a ubiquitin-activating enzyme (E1) inhibitor. First, himA, together with the trans-enoyl reductase himH, catalyzes the formation of apolyketide chain, which is then condensed with leucine by the NRPS activity of himA. Dieckmann cyclization and release from himA gives a tetramic acid intermediate as the product of himA PKS-NRPS. HimG then catalyzes alpha-oxidation of the tetramic acid ring, with a subsequent rearrangement to yield apyrone intermediate. Two terminal methyl groups of polyketide and amide side chains are oxidized to carboxylic acids by himC cytochrome P450 monooxygenase to form himeic acid A. Himeic acid A is further converted to himeic acid B and C during culture growth. No gene responsible for pyrone to pyridone conversion was found in the him gene cluster and himeic acid A is non-enzymatically converted to himeic acid C by the incorporation of an ammonium nitrogen atom in a pH5 buffer, and to himeic acid B at a conversion ratio of 50% during incubation in MeOH for 5 days. The sequence is that of Cytochrome P450 monooxygenase himC from Aspergillus japonicus.